A 473-amino-acid polypeptide reads, in one-letter code: UDP-N-acetylmuramoylalanine--D-glutamate ligase (473 aa).

G120–T126 is a binding site for ATP.

Belongs to the MurCDEF family.

The protein localises to the cytoplasm. It catalyses the reaction UDP-N-acetyl-alpha-D-muramoyl-L-alanine + D-glutamate + ATP = UDP-N-acetyl-alpha-D-muramoyl-L-alanyl-D-glutamate + ADP + phosphate + H(+). It participates in cell wall biogenesis; peptidoglycan biosynthesis. In terms of biological role, cell wall formation. Catalyzes the addition of glutamate to the nucleotide precursor UDP-N-acetylmuramoyl-L-alanine (UMA). The chain is UDP-N-acetylmuramoylalanine--D-glutamate ligase from Nitrosospira multiformis (strain ATCC 25196 / NCIMB 11849 / C 71).